The primary structure comprises 333 residues: Cell division protein FtsQ (333 aa).

Residues 1 to 99 form a disordered region; that stretch reads MTGTGPHGDP…ARREAKRRAV (99 aa). At 1–118 the chain is on the cytoplasmic side; that stretch reads MTGTGPHGDP…VPRNTIRGLK (118 aa). Residues 11–22 are compositionally biased toward acidic residues; sequence AEDPAGPDDTAA. The segment covering 44 to 57 has biased composition (low complexity); the sequence is TTETTAQTGTTAEA. Residues 73 to 92 are compositionally biased toward basic and acidic residues; it reads ERAERRAARDRAMAIEQARR. The helical transmembrane segment at 119–139 threads the bilayer; it reads VLMWAALVSVLAVALGLLLYF. The Extracellular portion of the chain corresponds to 140–333; that stretch reads TPIMSARNVE…VSSPDLPTVK (194 aa). In terms of domain architecture, POTRA spans 143–211; sequence MSARNVEVSG…STLKISIVER (69 aa).

Belongs to the FtsQ/DivIB family. FtsQ subfamily.

It is found in the cell membrane. Functionally, essential cell division protein. The polypeptide is Cell division protein FtsQ (Mycolicibacterium smegmatis (strain ATCC 700084 / mc(2)155) (Mycobacterium smegmatis)).